A 373-amino-acid chain; its full sequence is 3-isopropylmalate dehydrogenase (373 aa).

82–93 provides a ligand contact to NAD(+); the sequence is GPKWGTGTVRPE. Substrate is bound by residues Arg-100, Arg-110, Arg-139, and Asp-231. 3 residues coordinate Mg(2+): Asp-231, Asp-256, and Asp-260. Position 295–306 (295–306) interacts with NAD(+); the sequence is GSAPDLPANKVN.

It belongs to the isocitrate and isopropylmalate dehydrogenases family. Homodimer. Mg(2+) serves as cofactor. The cofactor is Mn(2+).

The protein resides in the cytoplasm. The enzyme catalyses (2R,3S)-3-isopropylmalate + NAD(+) = 4-methyl-2-oxopentanoate + CO2 + NADH. It functions in the pathway amino-acid biosynthesis; L-leucine biosynthesis; L-leucine from 3-methyl-2-oxobutanoate: step 3/4. In terms of biological role, catalyzes the oxidation of 3-carboxy-2-hydroxy-4-methylpentanoate (3-isopropylmalate) to 3-carboxy-4-methyl-2-oxopentanoate. The product decarboxylates to 4-methyl-2 oxopentanoate. The protein is 3-isopropylmalate dehydrogenase (LEU2) of Candida albicans (Yeast).